The sequence spans 1368 residues: DNA-directed RNA polymerase subunit beta (1368 aa).

The protein belongs to the RNA polymerase beta chain family. The RNAP catalytic core consists of 2 alpha, 1 beta, 1 beta' and 1 omega subunit. When a sigma factor is associated with the core the holoenzyme is formed, which can initiate transcription.

The enzyme catalyses RNA(n) + a ribonucleoside 5'-triphosphate = RNA(n+1) + diphosphate. Functionally, DNA-dependent RNA polymerase catalyzes the transcription of DNA into RNA using the four ribonucleoside triphosphates as substrates. This Burkholderia pseudomallei (strain K96243) protein is DNA-directed RNA polymerase subunit beta.